Consider the following 355-residue polypeptide: Adenine deaminase (355 aa).

His-24, His-26, and His-204 together coordinate Zn(2+). Residue Glu-207 is the Proton donor of the active site. Residue Asp-285 coordinates Zn(2+). Asp-286 contacts substrate.

This sequence belongs to the metallo-dependent hydrolases superfamily. Adenosine and AMP deaminases family. Adenine deaminase type 2 subfamily. The cofactor is Zn(2+).

The catalysed reaction is adenine + H2O + H(+) = hypoxanthine + NH4(+). Its function is as follows. Catalyzes the hydrolytic deamination of adenine to hypoxanthine. Plays an important role in the purine salvage pathway and in nitrogen catabolism. This is Adenine deaminase from Geotalea uraniireducens (strain Rf4) (Geobacter uraniireducens).